The sequence spans 91 residues: Small ribosomal subunit protein uS15c (91 aa).

It belongs to the universal ribosomal protein uS15 family. As to quaternary structure, part of the 30S ribosomal subunit.

It localises to the plastid. The protein resides in the chloroplast. This is Small ribosomal subunit protein uS15c (rps15) from Phalaenopsis aphrodite subsp. formosana (Moth orchid).